Reading from the N-terminus, the 186-residue chain is Peptidoglycan-recognition protein SD (186 aa).

A signal peptide spans 1–18 (MTWIGLLIVGLTAIAVQG). The N-acetylmuramoyl-L-alanine amidase domain maps to 47-169 (AVIAHTAGGA…RQVSATMSPG (123 aa)). A disulfide bridge links Cys57 with Cys63. A glycan (N-linked (GlcNAc...) asparagine) is linked at Asn181.

The protein belongs to the N-acetylmuramoyl-L-alanine amidase 2 family.

It is found in the secreted. Functionally, peptidoglycan-recognition protein that plays a key role in innate immunity by binding to peptidoglycans (PGN) of Gram-positive bacteria and activating the Toll pathway. Has no activity against on Gram-negative bacteria and fungi. Shows some partial redundancy with PRPGP-SA in Gram-positive bacteria recognition. May act by activating the proteolytic cleavage of Spatzle and the subsequent activation of Toll pathway. Recognizes S.aureus PGN. This is Peptidoglycan-recognition protein SD (PGRP-SD) from Drosophila simulans (Fruit fly).